The sequence spans 338 residues: Putative transposase for insertion sequence element IS4SA (338 aa).

This sequence belongs to the transposase 11 family.

This chain is Putative transposase for insertion sequence element IS4SA, found in Synechocystis sp. (strain ATCC 27184 / PCC 6803 / Kazusa).